The chain runs to 501 residues: Cytochrome P450 90A4 (501 aa).

Residues 2–22 form a helical membrane-spanning segment; sequence AAAALLLLAAAAAAVVVAMAL. Cysteine 446 is a binding site for heme.

The protein belongs to the cytochrome P450 family. Heme serves as cofactor. Highly expressed in shoot apex and inflorenscence. Expressed in roots, stems, leaf blades and leaf sheaths.

It localises to the cell membrane. It functions in the pathway plant hormone biosynthesis; brassinosteroid biosynthesis. Its function is as follows. Catalyzes the C23-alpha-hydroxylation step in brassinosteroid biosynthesis. Converts 6-deoxocathasterone to 6-deoxoteasterone in the late C6-oxidation pathway and cathasterone to teasterone (TE) in the early C6-oxidation pathway of brassinolide (BL) biosynthesis. This chain is Cytochrome P450 90A4, found in Oryza sativa subsp. japonica (Rice).